We begin with the raw amino-acid sequence, 247 residues long: Protein Thf1 (247 aa).

Positions I198–E224 form a coiled coil. A disordered region spans residues L209–S247. Positions E210–S226 are enriched in basic and acidic residues. Residues D228–S247 show a composition bias toward polar residues.

Belongs to the THF1 family.

In terms of biological role, may be involved in photosynthetic membrane biogenesis. This is Protein Thf1 from Acaryochloris marina (strain MBIC 11017).